Consider the following 323-residue polypeptide: Lipid A biosynthesis myristoyltransferase (323 aa).

A helical transmembrane segment spans residues 23–43; it reads YWGAWLGVAAMAGIALTPPKF. The short motif at 139–144 is the HXXXXD motif element; that stretch reads HGWAVD.

This sequence belongs to the LpxL/LpxM/LpxP family. LpxM subfamily.

It is found in the cell inner membrane. It catalyses the reaction alpha-Kdo-(2-&gt;4)-alpha-Kdo-(2-&gt;6)-(dodecanoyl)-lipid IVA (E. coli) + tetradecanoyl-[ACP] = alpha-Kdo-(2-&gt;4)-alpha-Kdo-(2-&gt;6)-lipid A (E. coli) + holo-[ACP]. It carries out the reaction (9Z)-hexadecenoyl-(Kdo)2-lipid IVA (E. coli) + tetradecanoyl-[ACP] = ((9Z)-hexadecenoyl-tetradecanoyl)-(Kdo)2-lipid A + holo-[ACP]. The protein operates within glycolipid biosynthesis; KDO(2)-lipid A biosynthesis; KDO(2)-lipid A from CMP-3-deoxy-D-manno-octulosonate and lipid IV(A): step 4/4. It functions in the pathway bacterial outer membrane biogenesis; lipopolysaccharide biosynthesis. In terms of biological role, catalyzes the transfer of myristate from myristoyl-[acyl-carrier-protein] (ACP) to Kdo(2)-(lauroyl)-lipid IV(A) to form Kdo(2)-lipid A. Can probably also catalyze the transfer of myristate to Kdo(2)-(palmitoleoyl)-lipid IV(A) to form the cold-adapted Kdo(2)-lipid A. In vitro, can acylate Kdo(2)-lipid IV(A), but acylation of (KDO)2-(lauroyl)-lipid IV(A) is about 100 times faster. In vitro, can use lauroyl-ACP but displays a slight kinetic preference for myristoyl-ACP. This chain is Lipid A biosynthesis myristoyltransferase, found in Escherichia coli (strain K12).